Consider the following 398-residue polypeptide: Acetate kinase (398 aa).

N7 serves as a coordination point for Mg(2+). Position 14 (K14) interacts with ATP. R91 lines the substrate pocket. The active-site Proton donor/acceptor is D148. ATP contacts are provided by residues 208 to 212, 283 to 285, and 331 to 335; these read HIGNG, DMR, and GVGEN. E384 is a Mg(2+) binding site.

It belongs to the acetokinase family. Homodimer. It depends on Mg(2+) as a cofactor. Requires Mn(2+) as cofactor.

It localises to the cytoplasm. The enzyme catalyses acetate + ATP = acetyl phosphate + ADP. Its pathway is metabolic intermediate biosynthesis; acetyl-CoA biosynthesis; acetyl-CoA from acetate: step 1/2. Its function is as follows. Catalyzes the formation of acetyl phosphate from acetate and ATP. Can also catalyze the reverse reaction. This Phocaeicola vulgatus (strain ATCC 8482 / DSM 1447 / JCM 5826 / CCUG 4940 / NBRC 14291 / NCTC 11154) (Bacteroides vulgatus) protein is Acetate kinase.